Here is a 172-residue protein sequence, read N- to C-terminus: Adenine phosphoribosyltransferase (172 aa).

It belongs to the purine/pyrimidine phosphoribosyltransferase family. As to quaternary structure, homodimer.

It is found in the cytoplasm. It catalyses the reaction AMP + diphosphate = 5-phospho-alpha-D-ribose 1-diphosphate + adenine. The protein operates within purine metabolism; AMP biosynthesis via salvage pathway; AMP from adenine: step 1/1. Functionally, catalyzes a salvage reaction resulting in the formation of AMP, that is energically less costly than de novo synthesis. This is Adenine phosphoribosyltransferase from Pelobacter propionicus (strain DSM 2379 / NBRC 103807 / OttBd1).